The following is a 113-amino-acid chain: MQFSTVSFAIFAILPAMVAAMPAETSPVPKPALPVFEELCPDAERQKCAESTDNLKRCLQINGASICVIDCGSQTTCRTQCKQQLKNEKANGFCTVGDNPCICNLNGAANSAH.

The first 20 residues, 1–20 (MQFSTVSFAIFAILPAMVAA), serve as a signal peptide directing secretion.

It localises to the secreted. In terms of biological role, secreted effector involved in biotrophic colonization of plant cells. This is Biotrophy-associated secreted protein 3 from Pyricularia oryzae (strain 70-15 / ATCC MYA-4617 / FGSC 8958) (Rice blast fungus).